A 63-amino-acid polypeptide reads, in one-letter code: Iota-crystallin (63 aa).

The protein belongs to the calycin superfamily. Fatty-acid binding protein (FABP) family.

Its function is as follows. Binds vitamin A2 in the eye lens and thus functions as a UV filter. Intracellular transport of retinol. This is Iota-crystallin (CRBPI) from Gonatodes vittatus (Wiegmann's striped gecko).